The sequence spans 375 residues: Outer membrane porin C (375 aa).

The N-terminal stretch at 1–21 is a signal peptide; sequence MKVKVLSLLVPALLVAGAANA. Over 22–33 the chain is Periplasmic; that stretch reads AEVYNKDGNKLD. The chain crosses the membrane as a beta stranded span at residues 34-42; it reads LYGKVDGLH. The Extracellular portion of the chain corresponds to 43 to 53; it reads YFSDDKSVDGD. A beta stranded transmembrane segment spans residues 54–63; that stretch reads QTYMRLGFKG. The Periplasmic segment spans residues 64 to 73; it reads ETQVTDQLTG. Residues 74-84 traverse the membrane as a beta stranded segment; it reads YGQWEYQIQGN. At 85–91 the chain is on the extracellular side; the sequence is APESENN. A beta stranded membrane pass occupies residues 92 to 101; that stretch reads SWTRVAFAGL. Topologically, residues 102-106 are periplasmic; it reads KFQDI. Residues 107 to 115 form a beta stranded membrane-spanning segment; sequence GSFDYGRNY. The Extracellular portion of the chain corresponds to 116-141; the sequence is GVVYDVTSWTDVLPEFGGDTYGSDNF. A beta stranded transmembrane segment spans residues 142-154; the sequence is MQQRGNGFATYRN. The Periplasmic segment spans residues 155 to 163; sequence TDFFGLVDG. Residues 164-171 traverse the membrane as a beta stranded segment; the sequence is LNFAVQYQ. At 172-204 the chain is on the extracellular side; the sequence is GQNGSVSGENDPDFTGHGITNNGRKALRQNGDG. The chain crosses the membrane as a beta stranded span at residues 205–211; sequence VGGSITY. The Periplasmic segment spans residues 212–215; sequence DYEG. Residues 216-223 form a beta stranded membrane-spanning segment; that stretch reads FGVGAAVS. Over 224-245 the chain is Extracellular; it reads SSKRTDAQNTAAYIGNGDRAET. The chain crosses the membrane as a beta stranded span at residues 246–252; it reads YTGGLKY. At 253–256 the chain is on the periplasmic side; that stretch reads DANN. A beta stranded membrane pass occupies residues 257 to 264; sequence IYLAAQYT. Topologically, residues 265–273 are extracellular; sequence QTYNATRVG. The chain crosses the membrane as a beta stranded span at residues 274-290; that stretch reads SLGWANKAQNFEAVAQY. Over 291–295 the chain is Periplasmic; it reads QFDFG. A beta stranded membrane pass occupies residues 296 to 303; sequence LRPSVAYL. Over 304–326 the chain is Extracellular; sequence QSKGKNLGTIGTRNYDDEDILKY. A beta stranded transmembrane segment spans residues 327-334; the sequence is VDVGATYY. Residues 335–338 are Periplasmic-facing; sequence FNKN. A beta stranded membrane pass occupies residues 339-346; sequence MSTYVDYK. Residues 347–366 are Extracellular-facing; the sequence is INLLDDNQFTRDAGINTDNI. The beta stranded transmembrane segment at 367 to 374 threads the bilayer; the sequence is VALGLVYQ. Position 375 (phenylalanine 375) is a topological domain, periplasmic.

Belongs to the Gram-negative porin family. In terms of assembly, homotrimer. Forms mixed heterotrimers with OmpF; other mixed heterotrimers are also probable.

It localises to the cell outer membrane. Forms pores that allow passive diffusion of small molecules across the outer membrane. In terms of biological role, (Microbial infection) Supports colicin E5 entry in the absence of its major receptor OmpF. Its function is as follows. (Microbial infection) A mixed OmpC-OmpF heterotrimer is the outer membrane receptor for toxin CdiA-EC536. The chain is Outer membrane porin C (ompC) from Escherichia coli O6:K15:H31 (strain 536 / UPEC).